Consider the following 227-residue polypeptide: Orotate phosphoribosyltransferase (227 aa).

5-phospho-alpha-D-ribose 1-diphosphate is bound by residues Lys-51, Arg-119, Lys-120, and Lys-123. Residues Thr-149 and Arg-177 each coordinate orotate.

The protein belongs to the purine/pyrimidine phosphoribosyltransferase family. PyrE subfamily. As to quaternary structure, homodimer. Expressed in body wall muscles, spermatheca and vulva muscles.

It carries out the reaction orotidine 5'-phosphate + diphosphate = orotate + 5-phospho-alpha-D-ribose 1-diphosphate. The catalysed reaction is UMP + diphosphate = 5-phospho-alpha-D-ribose 1-diphosphate + uracil. It participates in pyrimidine metabolism; UMP biosynthesis via de novo pathway; UMP from orotate: step 1/2. Its pathway is pyrimidine metabolism; UMP biosynthesis via salvage pathway; UMP from uracil: step 1/1. In terms of biological role, phosphoribosyltransferase which catalyzes the formation of UMP from uracil in vitro and thus may be involved in UMP biosynthesis via the salvage pathway. May also participate in the first step of UMP synthesis by catalyzing the formation of orotidine 5'-phosphate, a UMP precursor, from orotate. The protein is Orotate phosphoribosyltransferase of Caenorhabditis elegans.